A 208-amino-acid chain; its full sequence is Protein-L-isoaspartate O-methyltransferase (208 aa).

Serine 59 is an active-site residue.

The protein belongs to the methyltransferase superfamily. L-isoaspartyl/D-aspartyl protein methyltransferase family.

Its subcellular location is the cytoplasm. It carries out the reaction [protein]-L-isoaspartate + S-adenosyl-L-methionine = [protein]-L-isoaspartate alpha-methyl ester + S-adenosyl-L-homocysteine. Catalyzes the methyl esterification of L-isoaspartyl residues in peptides and proteins that result from spontaneous decomposition of normal L-aspartyl and L-asparaginyl residues. It plays a role in the repair and/or degradation of damaged proteins. This Vibrio cholerae serotype O1 (strain ATCC 39541 / Classical Ogawa 395 / O395) protein is Protein-L-isoaspartate O-methyltransferase.